A 36-amino-acid chain; its full sequence is Photosystem I reaction center subunit VIII (36 aa).

The helical transmembrane segment at 9–29 (IFVPLVGLVFPAVAMASLFLY) threads the bilayer.

It belongs to the PsaI family.

The protein resides in the plastid. It localises to the chloroplast thylakoid membrane. In terms of biological role, may help in the organization of the PsaL subunit. In Ostreococcus tauri, this protein is Photosystem I reaction center subunit VIII.